The following is a 381-amino-acid chain: Alpha-methylacyl-CoA racemase (381 aa).

Residues arginine 36 and leucine 54–lysine 57 each bind substrate. At lysine 57 the chain carries N6-acetyllysine. 2 positions are modified to N6-acetyllysine; alternate: lysine 86 and lysine 100. N6-succinyllysine; alternate occurs at positions 86 and 100. Lysine 117 bears the N6-acetyllysine mark. Glycine 120–tyrosine 125 serves as a coordination point for substrate. Residue histidine 121 is the Proton acceptor of the active site. The Proton donor role is filled by aspartate 151. Lysine 267 bears the N6-succinyllysine mark. Positions threonine 316–serine 344 are disordered. A Microbody targeting signal motif is present at residues alanine 379–leucine 381.

This sequence belongs to the CoA-transferase III family. In terms of assembly, monomer.

The protein localises to the peroxisome. It localises to the mitochondrion. It catalyses the reaction a (2S)-2-methylacyl-CoA = a (2R)-2-methylacyl-CoA. The catalysed reaction is (25R)-3alpha,7alpha,12alpha-trihydroxy-5beta-cholestan-26-oyl-CoA = (25S)-3alpha,7alpha,12alpha-trihydroxy-5beta-cholestan-26-oyl-CoA. It carries out the reaction (2R,6)-dimethylheptanoyl-CoA = (2S,6)-dimethylheptanoyl-CoA. The protein operates within lipid metabolism; bile acid biosynthesis. It participates in lipid metabolism; fatty acid metabolism. In terms of biological role, catalyzes the interconversion of (R)- and (S)-stereoisomers of alpha-methyl-branched-chain fatty acyl-CoA esters. Acts only on coenzyme A thioesters, not on free fatty acids, and accepts as substrates a wide range of alpha-methylacyl-CoAs, including pristanoyl-CoA, trihydroxycoprostanoyl-CoA (an intermediate in bile acid synthesis), and arylpropionic acids like the anti-inflammatory drug ibuprofen (2-(4-isobutylphenyl)propionic acid) but neither 3-methyl-branched nor linear-chain acyl-CoAs. This is Alpha-methylacyl-CoA racemase (Amacr) from Mus musculus (Mouse).